An 895-amino-acid polypeptide reads, in one-letter code: Probable aminodeoxychorismate synthase, chloroplastic (895 aa).

A disordered region spans residues 1-45; the sequence is MAALRLPTPPPPRAPAPWLHSSHRRRVAAPRGAGGGGGGGGAVPP. The N-terminal 48 residues, 1-48, are a transit peptide targeting the chloroplast; that stretch reads MAALRLPTPPPPRAPAPWLHSSHRRRVAAPRGAGGGGGGGGAVPPPPV. Over residues 32–42 the composition is skewed to gly residues; it reads GAGGGGGGGGA. The Glutamine amidotransferase type-1 domain maps to 49–307; the sequence is RTLLIDNYDS…KKITTDFGLQ (259 aa). Cysteine 135 functions as the Nucleophile in the catalytic mechanism. Residues histidine 281 and glutamate 283 contribute to the active site. The PABB component stretch occupies residues 387 to 875; sequence IFSVLFGHHS…KAKAPTKVVE (489 aa).

It in the C-terminal section; belongs to the anthranilate synthase component I family.

It localises to the plastid. It is found in the chloroplast. It catalyses the reaction chorismate + L-glutamine = 4-amino-4-deoxychorismate + L-glutamate. It functions in the pathway cofactor biosynthesis; tetrahydrofolate biosynthesis; 4-aminobenzoate from chorismate: step 1/2. It participates in antibiotic biosynthesis; candicidin biosynthesis. Functionally, bifunctional enzyme that catalyzes the biosynthesis of 4-amino-4-deoxychorismate (ADC) from chorismate and glutamine. In the first step, a glutamine amidotransferase generates ammonia that is channelled between the binding sites of glutamine and chorismate and used along with chorismate in the second step, catalyzed by aminodeoxychorismate synthase, to produce ADC. Required for the synthesis of 4-aminobenzoate (PABA), an important component in tetrahydrofolate biosynthesis. Does not possess ADC lyase activity. The sequence is that of Probable aminodeoxychorismate synthase, chloroplastic (ADCS) from Oryza sativa subsp. japonica (Rice).